The primary structure comprises 307 residues: MKTLKEKNKHPRLRKTIRTKKVTQRKLSSSPVCLLCLQEPGDPEKLGEFLQKDNLCVHYFCLILSSRLPQKGQPNRGLHGFMPEDIKREAVRASKKICFVCKKKGAAIRCQNDQCVQNFHLPCGQERGCLSQFFGEYKSYCRKHRPTQNIHQGSLGEESCVLCCENLSRTSVENIQSPCCSQAIYHRKCIQKYAHTSAKHFFKCPQCNNREEFPQEMLRMGIHIPDRDAAWELEPGAFSELYQRYRHCDAPICLYEQGRDSFEDEGRWRLILCATCGSHGTHRDCSSLRPNSKKWECNECLPASTTS.

The C2HC pre-PHD-type zinc-finger motif lies at 30–68; sequence SPVCLLCLQEPGDPEKLGEFLQKDNLCVHYFCLILSSRL. Zn(2+) is bound by residues cysteine 33, cysteine 36, histidine 58, and cysteine 61. The tract at residues 67-92 is required for interaction and ubiquitination of the nucleosome core particle; it reads RLPQKGQPNRGLHGFMPEDIKREAVR. A PHD-type zinc finger spans residues 96–145; that stretch reads KICFVCKKKGAAIRCQNDQCVQNFHLPCGQERGCLSQFFGEYKSYCRKHR. Zn(2+) contacts are provided by cysteine 98, cysteine 101, cysteine 110, cysteine 115, histidine 120, cysteine 123, cysteine 141, histidine 144, cysteine 160, cysteine 163, cysteine 179, cysteine 180, histidine 186, cysteine 189, cysteine 204, cysteine 207, cysteine 248, cysteine 253, cysteine 273, cysteine 276, histidine 282, cysteine 285, cysteine 297, and cysteine 300. Residues 150–307 form a required for interaction with ubiquitinated UBE2D2 region; that stretch reads IHQGSLGEES…NECLPASTTS (158 aa). The RING-type; degenerate zinc-finger motif lies at 160 to 208; sequence CVLCCENLSRTSVENIQSPCCSQAIYHRKCIQKYAHTSAKHFFKCPQCN. Residues 244-301 are required for association with and ubiquitination of H3; the sequence is RYRHCDAPICLYEQGRDSFEDEGRWRLILCATCGSHGTHRDCSSLRPNSKKWECNECL.

In terms of assembly, interacts with MEF2C; the interaction promotes MEF2C binding to its transcription targets. Interacts with GATA4; the interaction promotes GATA4 binding to its transcription targets. Interacts with UBE2D2; the interaction inhibits cleavage of PHF7 and promotes association of the complex with the nucleosome core particle. In terms of tissue distribution, expressed in Leydig cells and in developing spermatids (at protein level). Highly expressed in Sertoli cells in testis.

The protein localises to the nucleus. The enzyme catalyses S-ubiquitinyl-[E2 ubiquitin-conjugating enzyme]-L-cysteine + [acceptor protein]-L-lysine = [E2 ubiquitin-conjugating enzyme]-L-cysteine + N(6)-ubiquitinyl-[acceptor protein]-L-lysine.. It participates in protein modification; protein ubiquitination. E3 ubiquitin-protein ligase which ubiquitinates histone H3 at 'Lys-14'. Required for male fertility, via inhibition of SPOP-mediated BRDT degradation when in the presence of acetylated histone H4 in early condensing spermatids. Stabilization of BRDT allows it to facilitate histone removal in early condensing spermatids and promote the progression of histone-to-protamine exchange. Promotes the expression of steroidogenesis proteins in the testes, and as a result plays a role in maintaining testosterone levels and repressing osteoclastogenesis. Promotes transcription of cardiac enhancer genes by facilitating binding of cardiac transcription factors such as MEF2C and GATA4 to target gene promoters. Ubiquitinates histone H4. Ubiquitinates histone H2A and H3 as part of the nucleosome core particle. This Mus musculus (Mouse) protein is E3 ubiquitin-protein ligase PHF7.